Reading from the N-terminus, the 212-residue chain is Nucleoside diphosphate kinase homolog 5 (212 aa).

Residues 13-145 form an NDK region; the sequence is EKTLAIIKPD…EREIRFMFPE (133 aa).

The protein belongs to the NDK family. As to quaternary structure, component of the axonemal radial spoke complex 1 (RS1), at least composed of spoke head proteins RSPH1, RSPH3, RSPH9 and the cilia-specific component RSPH4A or sperm-specific component RSPH6A, spoke stalk proteins RSPH14, DNAJB13, DYDC1, ROPN1L and NME5, and the anchor protein IQUB. Interacts with IQUB. Specifically expressed in testis germinal cells.

It is found in the cell projection. Its subcellular location is the cilium. The protein localises to the cytoplasm. The protein resides in the cytoskeleton. It localises to the flagellum axoneme. Its function is as follows. Functions as part of axonemal radial spoke complexes that play an important part in the motility of sperm and cilia. Does not seem to have nucleoside diphosphate kinase (NDPK) activity. Confers protection from cell death by BAX and alters the cellular levels of several antioxidant enzymes including GPX5. May play a role in spermiogenesis by increasing the ability of late-stage spermatids to eliminate reactive oxygen species. Exhibits a 3'-5' exonuclease activity with a preference for single-stranded DNA, suggesting roles in DNA proofreading and repair. This Homo sapiens (Human) protein is Nucleoside diphosphate kinase homolog 5.